Here is a 198-residue protein sequence, read N- to C-terminus: UPF0314 protein Saro_1818 (198 aa).

5 helical membrane-spanning segments follow: residues 13–33, 62–82, 96–116, 153–173, and 177–197; these read GGSL…LGMG, WYSF…HIVW, LALA…PIII, APVL…LWAI, and LALN…WQGG.

The protein belongs to the UPF0314 family.

The protein resides in the cell membrane. This chain is UPF0314 protein Saro_1818, found in Novosphingobium aromaticivorans (strain ATCC 700278 / DSM 12444 / CCUG 56034 / CIP 105152 / NBRC 16084 / F199).